The sequence spans 227 residues: Cytochrome c oxidase subunit 2 (227 aa).

The Mitochondrial intermembrane portion of the chain corresponds to 1 to 26 (MATWSNLNLQNSSSPLMEQLIFFHDH). The helical transmembrane segment at 27–48 (TLMILLMITVLVAYIMSMLFFN) threads the bilayer. The Mitochondrial matrix portion of the chain corresponds to 49-62 (LYTNRFLLEGQTIE). The helical transmembrane segment at 63-82 (IIWTILPAITLIFIALPSLR) threads the bilayer. The Mitochondrial intermembrane segment spans residues 83 to 227 (LLYLLDESMD…FINWIKNYSS (145 aa)). Cu cation is bound by residues His160, Cys195, Glu197, Cys199, His203, and Met206. A Mg(2+)-binding site is contributed by Glu197.

The protein belongs to the cytochrome c oxidase subunit 2 family. Component of the cytochrome c oxidase (complex IV, CIV), a multisubunit enzyme composed of a catalytic core of 3 subunits and several supernumerary subunits. The complex exists as a monomer or a dimer and forms supercomplexes (SCs) in the inner mitochondrial membrane with ubiquinol-cytochrome c oxidoreductase (cytochrome b-c1 complex, complex III, CIII). Cu cation serves as cofactor.

The protein localises to the mitochondrion inner membrane. The catalysed reaction is 4 Fe(II)-[cytochrome c] + O2 + 8 H(+)(in) = 4 Fe(III)-[cytochrome c] + 2 H2O + 4 H(+)(out). Its function is as follows. Component of the cytochrome c oxidase, the last enzyme in the mitochondrial electron transport chain which drives oxidative phosphorylation. The respiratory chain contains 3 multisubunit complexes succinate dehydrogenase (complex II, CII), ubiquinol-cytochrome c oxidoreductase (cytochrome b-c1 complex, complex III, CIII) and cytochrome c oxidase (complex IV, CIV), that cooperate to transfer electrons derived from NADH and succinate to molecular oxygen, creating an electrochemical gradient over the inner membrane that drives transmembrane transport and the ATP synthase. Cytochrome c oxidase is the component of the respiratory chain that catalyzes the reduction of oxygen to water. Electrons originating from reduced cytochrome c in the intermembrane space (IMS) are transferred via the dinuclear copper A center (CU(A)) of subunit 2 and heme A of subunit 1 to the active site in subunit 1, a binuclear center (BNC) formed by heme A3 and copper B (CU(B)). The BNC reduces molecular oxygen to 2 water molecules using 4 electrons from cytochrome c in the IMS and 4 protons from the mitochondrial matrix. This is Cytochrome c oxidase subunit 2 (COII) from Acheta domesticus (House cricket).